A 596-amino-acid chain; its full sequence is Probable lysosomal cobalamin transporter (596 aa).

The next 10 membrane-spanning stretches (helical) occupy residues 13 to 33, 45 to 65, 99 to 119, 150 to 170, 201 to 221, 318 to 338, 353 to 373, 381 to 401, 425 to 445, and 512 to 532; these read IWVA…ITTF, VSIV…LLPV, VVYY…IPFA, LGFV…PAAG, LLIT…LALL, LLGG…MLIT, GYIL…VQSA, ILMA…IATI, IATV…AMIV, and VFGA…MVVF. N543 carries N-linked (GlcNAc...) asparagine glycosylation. The disordered stretch occupies residues 576–596; it reads GRAKNRNGYGTGGGEGSNGRG. The segment covering 584 to 596 has biased composition (gly residues); the sequence is YGTGGGEGSNGRG.

Belongs to the LIMR family. LMBRD1 subfamily.

It localises to the lysosome membrane. In terms of biological role, probable lysosomal cobalamin transporter. Required to export cobalamin from lysosomes allowing its conversion to cofactors. This Podospora anserina (strain S / ATCC MYA-4624 / DSM 980 / FGSC 10383) (Pleurage anserina) protein is Probable lysosomal cobalamin transporter.